We begin with the raw amino-acid sequence, 475 residues long: Ribulose bisphosphate carboxylase large chain (475 aa).

Positions 1 to 2 (MS) are excised as a propeptide. The residue at position 3 (proline 3) is an N-acetylproline. Lysine 14 carries the N6,N6,N6-trimethyllysine modification. Substrate contacts are provided by asparagine 123 and threonine 173. Lysine 175 (proton acceptor) is an active-site residue. Residue lysine 177 coordinates substrate. The Mg(2+) site is built by lysine 201, aspartate 203, and glutamate 204. The residue at position 201 (lysine 201) is an N6-carboxylysine. The active-site Proton acceptor is the histidine 294. Residues arginine 295, histidine 327, and serine 379 each coordinate substrate.

Belongs to the RuBisCO large chain family. Type I subfamily. As to quaternary structure, heterohexadecamer of 8 large chains and 8 small chains; disulfide-linked. The disulfide link is formed within the large subunit homodimers. It depends on Mg(2+) as a cofactor. The disulfide bond which can form in the large chain dimeric partners within the hexadecamer appears to be associated with oxidative stress and protein turnover.

The protein localises to the plastid. The protein resides in the chloroplast. The enzyme catalyses 2 (2R)-3-phosphoglycerate + 2 H(+) = D-ribulose 1,5-bisphosphate + CO2 + H2O. It catalyses the reaction D-ribulose 1,5-bisphosphate + O2 = 2-phosphoglycolate + (2R)-3-phosphoglycerate + 2 H(+). In terms of biological role, ruBisCO catalyzes two reactions: the carboxylation of D-ribulose 1,5-bisphosphate, the primary event in carbon dioxide fixation, as well as the oxidative fragmentation of the pentose substrate in the photorespiration process. Both reactions occur simultaneously and in competition at the same active site. In Magnolia macrophylla (Bigleaf magnolia), this protein is Ribulose bisphosphate carboxylase large chain.